Here is a 746-residue protein sequence, read N- to C-terminus: UvrABC system protein C (746 aa).

Residues 18–97 form the GIY-YIG domain; sequence AKPGVYKWRD…IKEFDPRFNV (80 aa). A UVR domain is found at 211-246; that stretch reads RPYIAQLTRDMKEASAELEFEKAARLRDQIQMLETV. The interval 557-577 is disordered; that stretch reads ANGNDNGEGGSDISGKGHAVP.

It belongs to the UvrC family. In terms of assembly, interacts with UvrB in an incision complex.

It is found in the cytoplasm. In terms of biological role, the UvrABC repair system catalyzes the recognition and processing of DNA lesions. UvrC both incises the 5' and 3' sides of the lesion. The N-terminal half is responsible for the 3' incision and the C-terminal half is responsible for the 5' incision. The chain is UvrABC system protein C from Bifidobacterium longum (strain DJO10A).